Consider the following 104-residue polypeptide: Large ribosomal subunit protein uL24 (104 aa).

The tract at residues 41 to 61 (ISKKHKKPTPNEKQSGGIFEK) is disordered.

The protein belongs to the universal ribosomal protein uL24 family. In terms of assembly, part of the 50S ribosomal subunit.

Functionally, one of two assembly initiator proteins, it binds directly to the 5'-end of the 23S rRNA, where it nucleates assembly of the 50S subunit. In terms of biological role, one of the proteins that surrounds the polypeptide exit tunnel on the outside of the subunit. The protein is Large ribosomal subunit protein uL24 of Wigglesworthia glossinidia brevipalpis.